Here is a 315-residue protein sequence, read N- to C-terminus: Acetaldehyde dehydrogenase (315 aa).

Position 13–16 (13–16 (SGNI)) interacts with NAD(+). Cysteine 131 acts as the Acyl-thioester intermediate in catalysis. NAD(+)-binding positions include 163–171 (SAGPGTRAN) and asparagine 290.

Belongs to the acetaldehyde dehydrogenase family.

It carries out the reaction acetaldehyde + NAD(+) + CoA = acetyl-CoA + NADH + H(+). The protein is Acetaldehyde dehydrogenase of Xanthobacter autotrophicus (strain ATCC BAA-1158 / Py2).